The following is a 372-amino-acid chain: Signal peptide peptidase-like 1 (372 aa).

Residues 1-6 are Lumenal-facing; that stretch reads METLWT. Residues 7-27 form a helical membrane-spanning segment; that stretch reads LLYLLEPAPATLIVTAVTVTF. Over 28 to 54 the chain is Cytoplasmic; the sequence is ASAFRALNYGKEMERNRDFSEASITLD. A helical transmembrane segment spans residues 55-77; it reads SSQALMIPVMSSCSLLLMFYLFS. Residues 78-81 are Lumenal-facing; it reads SVSQ. The chain crosses the membrane as a helical span at residues 82-104; it reads LLTAFTAIASVSSLFYWLSPYAV. The Cytoplasmic portion of the chain corresponds to 105–123; that stretch reads YMKTQLGLSDPFLSRCCSK. Residues 124–146 form a helical membrane-spanning segment; sequence SFTRIQGLLLVACAMTVVAWLIS. Residues 147 to 149 are Lumenal-facing; that stretch reads GHW. The chain crosses the membrane as a helical span at residues 150 to 167; that stretch reads VLNNLLGISICIAFVSHV. At 168 to 171 the chain is on the cytoplasmic side; sequence RLPN. The chain crosses the membrane as a helical span at residues 172-192; that stretch reads IKICAMLLVCLFVYDIFWVFF. Asp186 is an active-site residue. Residues 193-257 are Lumenal-facing; that stretch reads SERFFGANVM…GVVPGVSASD (65 aa). A helical transmembrane segment spans residues 258–278; sequence FMMLGLGDMAIPAMLLALVLC. Asp265 is an active-site residue. Residues 279–301 are Cytoplasmic-facing; sequence FDHRKTRDVVNIFDLKSSKGHKY. A helical membrane pass occupies residues 302 to 322; that stretch reads IWYALPGYAIGLVAALAAGVL. Residues 323–325 lie on the Lumenal side of the membrane; it reads THS. Residues 326 to 346 form a helical membrane-spanning segment; the sequence is PQPALLYLVPSTLGPVIFMSW. A PAL motif is present at residues 328–330; it reads PAL. Over 347–372 the chain is Cytoplasmic; it reads RRKDLAELWEGPALSNPIEKSHEIEI.

It belongs to the peptidase A22B family. As to expression, ubiquitous.

Its subcellular location is the endosome membrane. Intramembrane-cleaving aspartic protease (I-CLiP) that cleaves type II membrane signal peptides in the hydrophobic plane of the membrane. The polypeptide is Signal peptide peptidase-like 1 (SPPL1) (Arabidopsis thaliana (Mouse-ear cress)).